The chain runs to 439 residues: Glycosyl hydrolase DigH (439 aa).

The N-terminal stretch at 1-27 (MDICSRNEKLAIRRPAILVALALLLCS) is a signal peptide. Residue C28 is the site of N-palmitoyl cysteine attachment. Residue C28 is the site of S-diacylglycerol cysteine attachment. The segment at 34-54 (ESMVTPPAGSKPPATTQQSSQ) is disordered.

This sequence belongs to the glycosyl hydrolase-like 10 (GHL10) family.

Its subcellular location is the cell outer membrane. Its function is as follows. Divisome-localized glycosyl hydrolase that cleaves peptide-free (denuded) peptidoglycans. This is Glycosyl hydrolase DigH from Escherichia coli O6:H1 (strain CFT073 / ATCC 700928 / UPEC).